A 537-amino-acid chain; its full sequence is Interleukin-2 receptor subunit beta (537 aa).

The first 26 residues, 1–26, serve as a signal peptide directing secretion; that stretch reads MATVDLSWRLPLYILLLLLATTWVSA. The Extracellular portion of the chain corresponds to 27 to 239; it reads AVNDCSHLKC…FRTRPADPKE (213 aa). Cysteine 36 and cysteine 46 are disulfide-bonded. N-linked (GlcNAc...) asparagine glycosylation is found at asparagine 43, asparagine 55, and asparagine 71. Cysteine 74 and cysteine 86 form a disulfide bridge. A Fibronectin type-III domain is found at 135-235; sequence APHSLQVLHI…QPMAFRTRPA (101 aa). N-linked (GlcNAc...) asparagine glycosylation is present at asparagine 150. The WSXWS motif signature appears at 221–225; that stretch reads WSPWS. Residues 240-267 form a helical membrane-spanning segment; sequence IFPLPWLRCLLLVLGCFFGFLSCVCVLV. The Cytoplasmic segment spans residues 268 to 537; it reads KCRYLGPWLK…LQAQDSAHLI (270 aa). The Box 1 motif motif lies at 280–288; it reads LKCHIPDPS. Disordered stretches follow at residues 442-466 and 479-498; these read AYGN…SLAS and ELGD…QASV. Residues 487 to 497 show a composition bias toward polar residues; that stretch reads MSTNSSGQQAS.

This sequence belongs to the type I cytokine receptor family. Type 4 subfamily. As to quaternary structure, non-covalent dimer of an alpha and a beta subunit. IL2R exists in 3 different forms: a high affinity dimer, an intermediate affinity monomer (beta subunit), and a low affinity monomer (alpha subunit). The high and intermediate affinity forms also associate with a gamma subunit. Interacts with SHB upon interleukin stimulation.

It localises to the cell membrane. The protein localises to the cell surface. Functionally, receptor for interleukin-2. This beta subunit is involved in receptor mediated endocytosis and transduces the mitogenic signals of IL2. Probably in association with IL15RA, involved in the stimulation of neutrophil phagocytosis by IL15. This is Interleukin-2 receptor subunit beta (Il2rb) from Rattus norvegicus (Rat).